A 289-amino-acid polypeptide reads, in one-letter code: Urease accessory protein UreD (289 aa).

This sequence belongs to the UreD family. In terms of assembly, ureD, UreF and UreG form a complex that acts as a GTP-hydrolysis-dependent molecular chaperone, activating the urease apoprotein by helping to assemble the nickel containing metallocenter of UreC. The UreE protein probably delivers the nickel.

The protein localises to the cytoplasm. Functionally, required for maturation of urease via the functional incorporation of the urease nickel metallocenter. This is Urease accessory protein UreD from Cupriavidus pinatubonensis (strain JMP 134 / LMG 1197) (Cupriavidus necator (strain JMP 134)).